The chain runs to 40 residues: Serine proteinase-like BMK-CBP (40 aa).

The 40-residue stretch at 1-40 (IFGGTFAKNGEYPWMVVIDLPEFACGGVLISKKFVLTAAH) folds into the Peptidase S1 domain. His40 acts as the Charge relay system in catalysis.

Belongs to the peptidase S1 family. Expressed by the venom gland.

The protein localises to the secreted. Functionally, binds in a dose-dependent manner to the breast cancer cell line MCF-7. The polypeptide is Serine proteinase-like BMK-CBP (Olivierus martensii (Manchurian scorpion)).